Reading from the N-terminus, the 866-residue chain is Speckle targeted PIP5K1A-regulated poly(A) polymerase (866 aa).

Residues 16 to 46 (FRCCLCDVTTANRPSLDAHLKGRKHRDLVQL) form a Matrin-type zinc finger. The RRM domain occupies 56 to 128 (RSVFVSGFPR…HTLRVRPREQ (73 aa)). The interval 116–147 (LGGHTLRVRPREQKEFQSPASKSPKGVDSNSH) is disordered. Serine 205 serves as a coordination point for ATP. Residues aspartate 216 and aspartate 218 each coordinate Mg(2+). UTP contacts are provided by aspartate 216 and aspartate 218. Disordered regions lie at residues 223–249 (LGDMEEPQPDPQTPKLPEASSLDSTLA) and 267–321 (LSPT…EGKH). The segment covering 282–304 (TPSSLAPQTPDSALGSDTVTSPQ) has biased composition (polar residues). Asparagine 393 is an ATP binding site. The UTP site is built by asparagine 393, arginine 415, tyrosine 433, and histidine 550. The 59-residue stretch at 492-550 (LSSLLAQFFSCVSCWDLSGSLLSLREGQALMVAGGLPSDLWEGLRLGPMNLQDPFDLSH) folds into the PAP-associated domain. Residues 599–866 (SSPSSLLSAK…IPQALKNLLK (268 aa)) are KA1; binds the bulging loops of U6 snRNA but is dispensable for terminal uridylyltransferase activity. 3 disordered regions span residues 638-687 (QGTK…DHSE), 728-755 (EQNPMEPEGAGEGSPGETEKEASHPSSV), and 773-792 (RRRFQQQTKEEGRGGPSTGA). Residues 669-687 (KSCEEGKEEPQGCAGDHSE) show a composition bias toward basic and acidic residues. Phosphoserine is present on residues serine 686 and serine 741.

This sequence belongs to the DNA polymerase type-B-like family. In terms of assembly, associates with the cleavage and polyadenylation specificity factor (CPSF) complex. Interacts with CPSF1 and CPSF3; the interaction is direct. Interacts with PIP5K1A. The cofactor is Mg(2+). Mn(2+) serves as cofactor. Phosphorylated by CK1 in the proline-rich (Pro-rich) region.

Its subcellular location is the nucleus. The protein localises to the nucleolus. The protein resides in the nucleus speckle. It catalyses the reaction RNA(n) + UTP = RNA(n)-3'-uridine ribonucleotide + diphosphate. It carries out the reaction RNA(n) + ATP = RNA(n)-3'-adenine ribonucleotide + diphosphate. Its activity is regulated as follows. Adenylyltransferase activity is specifically phosphatidylinositol 4,5-bisphosphate (PtdIns(4,5)P2). Its function is as follows. Poly(A) polymerase that creates the 3'-poly(A) tail of specific pre-mRNAs. Localizes to nuclear speckles together with PIP5K1A and mediates polyadenylation of a select set of mRNAs, such as HMOX1. In addition to polyadenylation, it is also required for the 3'-end cleavage of pre-mRNAs: binds to the 3'UTR of targeted pre-mRNAs and promotes the recruitment and assembly of the CPSF complex on the 3'UTR of pre-mRNAs. In addition to adenylyltransferase activity, also has uridylyltransferase activity. However, the ATP ratio is higher than UTP in cells, suggesting that it functions primarily as a poly(A) polymerase. Acts as a specific terminal uridylyltransferase for U6 snRNA in vitro: responsible for a controlled elongation reaction that results in the restoration of the four 3'-terminal UMP-residues found in newly transcribed U6 snRNA. Not involved in replication-dependent histone mRNA degradation. This is Speckle targeted PIP5K1A-regulated poly(A) polymerase (Tut1) from Rattus norvegicus (Rat).